The primary structure comprises 432 residues: Adenylosuccinate synthetase (432 aa).

GTP is bound by residues 13–19 (GDEGKGK) and 41–43 (GHT). Asp-14 serves as the catalytic Proton acceptor. Positions 14 and 41 each coordinate Mg(2+). IMP is bound by residues 14–17 (DEGK), 39–42 (NAGH), Thr-130, Arg-144, Gln-225, Thr-240, and Arg-304. The active-site Proton donor is the His-42. 300–306 (ATTGRRR) serves as a coordination point for substrate. GTP contacts are provided by residues Arg-306, 332 to 334 (KLD), and 415 to 417 (STG).

This sequence belongs to the adenylosuccinate synthetase family. As to quaternary structure, homodimer. It depends on Mg(2+) as a cofactor.

Its subcellular location is the cytoplasm. It carries out the reaction IMP + L-aspartate + GTP = N(6)-(1,2-dicarboxyethyl)-AMP + GDP + phosphate + 2 H(+). The protein operates within purine metabolism; AMP biosynthesis via de novo pathway; AMP from IMP: step 1/2. Its function is as follows. Plays an important role in the de novo pathway of purine nucleotide biosynthesis. Catalyzes the first committed step in the biosynthesis of AMP from IMP. In Serratia proteamaculans (strain 568), this protein is Adenylosuccinate synthetase.